The following is a 446-amino-acid chain: Lysine histidine transporter 1 (446 aa).

Residues 1–37 (MVAQAPHDDHQDDEKLAAARQKEIEDWLPITSSRNAK) lie on the Cytoplasmic side of the membrane. The chain crosses the membrane as a helical span at residues 38 to 58 (WWYSAFHNVTAMVGAGVLGLP). Residues 59–63 (YAMSQ) lie on the Extracellular side of the membrane. A helical transmembrane segment spans residues 64–84 (LGWGPGIAVLVLSWVITLYTL). Topologically, residues 85 to 115 (WQMVEMHEMVPGKRFDRYHELGQHAFGEKLG) are cytoplasmic. Residues 116–136 (LYIVVPQQLIVEIGVCIVYMV) traverse the membrane as a helical segment. At 137-157 (TGGKSLKKFHELVCDDCKPIK) the chain is on the extracellular side. The helical transmembrane segment at 158 to 178 (LTYFIMIFASVHFVLSHLPNF) threads the bilayer. Over 179 to 180 (NS) the chain is Cytoplasmic. Residues 181 to 201 (ISGVSLAAAVMSLSYSTIAWA) traverse the membrane as a helical segment. Residues 202–227 (SSASKGVQEDVQYGYKAKTTAGTVFN) are Extracellular-facing. The chain crosses the membrane as a helical span at residues 228–248 (FFSGLGDVAFAYAGHNVVLEI). Topologically, residues 249 to 268 (QATIPSTPEKPSKGPMWRGV) are cytoplasmic. A helical transmembrane segment spans residues 269-289 (IVAYIVVALCYFPVALVGYYI). Residues 290-305 (FGNGVEDNILMSLKKP) are Extracellular-facing. A helical membrane pass occupies residues 306-326 (AWLIATANIFVVIHVIGSYQI). Residues 327–352 (YAMPVFDMMETLLVKKLNFRPTTTLR) lie on the Cytoplasmic side of the membrane. A helical membrane pass occupies residues 353-375 (FFVRNFYVAATMFVGMTFPFFGG). The Extracellular portion of the chain corresponds to 376–378 (LLA). The helical transmembrane segment at 379–401 (FFGGFAFAPTTYFLPCVIWLAIY) threads the bilayer. Topologically, residues 402 to 409 (KPKKYSLS) are cytoplasmic. A helical membrane pass occupies residues 410 to 430 (WWANWVCIVFGLFLMVLSPIG). Residues 431–446 (GLRTIVIQAKGYKFYS) lie on the Extracellular side of the membrane.

This sequence belongs to the amino acid/polyamine transporter 2 family. Amino acid/auxin permease (AAAP) (TC 2.A.18.2) subfamily. In terms of tissue distribution, expressed in roots, stems, flowers, leaves, siliques and pollen. Found in the tips of roots and in the rhizodermis of emerging roots and in lateral roots. Higher expression in older leaves as compared to joung leaves. Detected first at the hydathodes, then in the epidermis and finally in matures leaves in all mesophyll cells. Not detected in vascular bundles or in seeds.

The protein resides in the cell membrane. With respect to regulation, inhibited by carbonlycyanide m-chlorophenylhydrazone (CCCP) and DEPC. Its function is as follows. Amino acid-proton symporter. Transporter with a broad specificity for histidine, lysine, glutamic acid, alanine, serine, proline and glycine. Involved in both apoplastic transport of amino acids in leaves and their uptake by roots. In Arabidopsis thaliana (Mouse-ear cress), this protein is Lysine histidine transporter 1 (LHT1).